A 150-amino-acid chain; its full sequence is Mediator of RNA polymerase II transcription subunit 22a (150 aa).

Residues 99–127 (SLNDHVEQRIAEFDQEAEKTNRLLARIAD) are a coiled coil.

This sequence belongs to the Mediator complex subunit 22 family. In terms of assembly, component of the Mediator complex.

It is found in the nucleus. Component of the Mediator complex, a coactivator involved in the regulated transcription of nearly all RNA polymerase II-dependent genes. Mediator functions as a bridge to convey information from gene-specific regulatory proteins to the basal RNA polymerase II transcription machinery. The Mediator complex, having a compact conformation in its free form, is recruited to promoters by direct interactions with regulatory proteins and serves for the assembly of a functional preinitiation complex with RNA polymerase II and the general transcription factors. The sequence is that of Mediator of RNA polymerase II transcription subunit 22a (MED22A) from Arabidopsis thaliana (Mouse-ear cress).